The primary structure comprises 227 residues: AN1-type zinc finger protein 3 (227 aa).

Residues 12-44 form an A20-type zinc finger; that stretch reads PSLPPRCPCGFWGSSKTMNLCSKCFADFQKKQP. Positions 18, 20, 32, and 35 each coordinate Zn(2+). The segment at 41–151 is disordered; sequence KKQPDDDSTP…RPEESGRSKQ (111 aa). Composition is skewed to low complexity over residues 49–59 and 66–77; these read TPSTSNSQSDL and SDNNNTSVTTPT. 2 stretches are compositionally biased toward polar residues: residues 78–94 and 111–127; these read LSPS…VTSP and ITPT…SESE. A compositionally biased stretch (basic and acidic residues) spans 135 to 148; the sequence is RLVENPERPEESGR. An AN1-type zinc finger spans residues 151-200; sequence QKSRRRCFQCQTKLELVQQELGSCRCGYVFCMLHRLPEQHDCTFDHMGRG. The Zn(2+) site is built by Cys-157, Cys-160, Cys-174, Cys-176, Cys-181, His-184, His-190, and Cys-192.

This is AN1-type zinc finger protein 3 (Zfand3) from Rattus norvegicus (Rat).